The chain runs to 212 residues: External core antigen (212 aa).

The first 19 residues, 1–19, serve as a signal peptide directing secretion; it reads MQLFHLCLIIFCSCPTVQA. The interval 25-27 is HBEAG; sequence GWL. The interval 165–212 is disordered; it reads NAPILSTLPETTVVRRRGRSPRRRTPSPRRRRSQSPRRRRSQSPASQC. Residues 178 to 205 show a composition bias toward basic residues; that stretch reads VRRRGRSPRRRTPSPRRRRSQSPRRRRS. Repeat copies occupy residues 184 to 190, 191 to 198, and 199 to 206. The segment at 184 to 206 is 3 X 8 AA repeats of S-P-R-R-R-R-S-Q; it reads SPRRRTPSPRRRRSQSPRRRRSQ. The propeptide occupies 184–212; it reads SPRRRTPSPRRRRSQSPRRRRSQSPASQC.

It belongs to the orthohepadnavirus precore antigen family. In terms of assembly, homodimerizes. In terms of processing, phosphorylated. Post-translationally, cleaved by host furin.

The protein resides in the secreted. It is found in the host nucleus. Functionally, may regulate immune response to the intracellular capsid in acting as a T-cell tolerogen, by having an immunoregulatory effect which prevents destruction of infected cells by cytotoxic T-cells. This immune regulation may predispose to chronicity during perinatal infections and prevent severe liver injury during adult infections. This chain is External core antigen, found in Hepatitis B virus genotype F2 (isolate Brazil/w4B) (HBV-F).